The sequence spans 71 residues: Beta-defensin 10 (71 aa).

A signal peptide spans 1-23 (MKTLCSLLLIGCLLFSYDTPVVG). 3 disulfide bridges follow: Cys-37/Cys-66, Cys-44/Cys-59, and Cys-49/Cys-67.

Belongs to the beta-defensin family.

The protein localises to the secreted. Functionally, has antibacterial activity. In Rattus norvegicus (Rat), this protein is Beta-defensin 10 (Defb10).